A 352-amino-acid chain; its full sequence is tRNA pseudouridine synthase D (352 aa).

Asp81 functions as the Nucleophile in the catalytic mechanism. The TRUD domain maps to Gly157–Leu303.

This sequence belongs to the pseudouridine synthase TruD family.

The enzyme catalyses uridine(13) in tRNA = pseudouridine(13) in tRNA. Responsible for synthesis of pseudouridine from uracil-13 in transfer RNAs. This is tRNA pseudouridine synthase D from Pseudomonas entomophila (strain L48).